The chain runs to 341 residues: Anthranilate phosphoribosyltransferase (341 aa).

Residues Gly-79, 82–83 (GD), Thr-87, 89–92 (NIST), 107–115 (KHGNRAVSS), and Ser-119 each bind 5-phospho-alpha-D-ribose 1-diphosphate. Gly-79 lines the anthranilate pocket. A Mg(2+)-binding site is contributed by Ser-91. Asn-110 lines the anthranilate pocket. An anthranilate-binding site is contributed by Arg-165. Mg(2+) is bound by residues Asp-224 and Glu-225.

It belongs to the anthranilate phosphoribosyltransferase family. Homodimer. The cofactor is Mg(2+).

It carries out the reaction N-(5-phospho-beta-D-ribosyl)anthranilate + diphosphate = 5-phospho-alpha-D-ribose 1-diphosphate + anthranilate. Its pathway is amino-acid biosynthesis; L-tryptophan biosynthesis; L-tryptophan from chorismate: step 2/5. Functionally, catalyzes the transfer of the phosphoribosyl group of 5-phosphorylribose-1-pyrophosphate (PRPP) to anthranilate to yield N-(5'-phosphoribosyl)-anthranilate (PRA). This Bacillus cereus (strain AH820) protein is Anthranilate phosphoribosyltransferase.